The following is a 64-amino-acid chain: Tracheal antimicrobial peptide (64 aa).

The first 26 residues, 1–26 (MRLHHLLLALLFLVLSAWSGFTQGVG), serve as a signal peptide directing secretion. 3 disulfide bridges follow: C31/C60, C38/C53, and C43/C61.

It belongs to the beta-defensin family. LAP/TAP subfamily. Tracheal epithelium.

It localises to the secreted. In terms of biological role, has antibacterial activity in vitro against Escherichia coli, Staphylococcus aureus, Klebsiella pneumonia, and Pseudomonas aeruginosa. In addition, the peptide is active against Candida albicans, indicating a broad spectrum of activity. The sequence is that of Tracheal antimicrobial peptide from Bos taurus (Bovine).